Consider the following 439-residue polypeptide: Putative FBD-associated F-box protein At1g05080 (439 aa).

The F-box domain maps to 12-58 (EDRISVLPEDLLVVILDLLPTKDVVATMILSKRWLSIWTMVRTLEYT). The FBD domain maps to 360–410 (SWKQPSHVPECLSSQLEIFEWRDYGDRIIEEEFLTYVLANSKRLKTATISL).

This is Putative FBD-associated F-box protein At1g05080 from Arabidopsis thaliana (Mouse-ear cress).